Consider the following 297-residue polypeptide: Undecaprenyl-diphosphatase 3 (297 aa).

The next 6 helical transmembrane spans lie at 39-59 (PGAA…LIYF), 89-109 (WLVL…QDAI), 118-138 (LIAT…WYAS), 203-223 (FLLA…SIGG), 237-257 (PTIV…AWFL), and 268-288 (FVLY…GGAI).

The protein belongs to the UppP family.

The protein localises to the cell membrane. It carries out the reaction di-trans,octa-cis-undecaprenyl diphosphate + H2O = di-trans,octa-cis-undecaprenyl phosphate + phosphate + H(+). Functionally, catalyzes the dephosphorylation of undecaprenyl diphosphate (UPP). Confers resistance to bacitracin. The chain is Undecaprenyl-diphosphatase 3 from Frankia alni (strain DSM 45986 / CECT 9034 / ACN14a).